Consider the following 69-residue polypeptide: Fungal defensin oryzeasin (69 aa).

Positions Met-1–Ala-18 are cleaved as a signal peptide. Positions Ser-19–Arg-26 are excised as a propeptide. 3 disulfides stabilise this stretch: Cys-29-Cys-60, Cys-44-Cys-66, and Cys-48-Cys-68.

This sequence belongs to the invertebrate defensin family.

Its subcellular location is the secreted. It localises to the target cell membrane. In terms of biological role, shows antibacterial activity against numerous Gram-positive bacteria. It selectively inhibits peptidoglycan biosynthesis through complex formation with the cell wall precursor lipid II (1:1 molar ratio) thus inhibiting cell wall synthesis. The chain is Fungal defensin oryzeasin from Aspergillus oryzae (strain ATCC 42149 / RIB 40) (Yellow koji mold).